Here is a 345-residue protein sequence, read N- to C-terminus: N-acetyl-gamma-glutamyl-phosphate reductase (345 aa).

C151 is a catalytic residue.

The protein belongs to the NAGSA dehydrogenase family. Type 1 subfamily.

The protein localises to the cytoplasm. It catalyses the reaction N-acetyl-L-glutamate 5-semialdehyde + phosphate + NADP(+) = N-acetyl-L-glutamyl 5-phosphate + NADPH + H(+). It participates in amino-acid biosynthesis; L-arginine biosynthesis; N(2)-acetyl-L-ornithine from L-glutamate: step 3/4. Its function is as follows. Catalyzes the NADPH-dependent reduction of N-acetyl-5-glutamyl phosphate to yield N-acetyl-L-glutamate 5-semialdehyde. In Clostridium novyi (strain NT), this protein is N-acetyl-gamma-glutamyl-phosphate reductase.